A 544-amino-acid polypeptide reads, in one-letter code: uncharacterized protein (544 aa).

The N-terminal stretch at 1 to 34 (MIARRMLCARPWGPSCVVCALCGALAALVPAVGA) is a signal peptide. The disordered stretch occupies residues 38 to 69 (AVPAPGTPAPPAHTASEAVPPAPEPRAEGEQP).

Belongs to the TP096X family.

This is an uncharacterized protein from Treponema pallidum (strain Nichols).